Consider the following 388-residue polypeptide: Glucose-6-phosphate/phosphate translocator 2, chloroplastic (388 aa).

The transit peptide at 1 to 68 directs the protein to the chloroplast; it reads MLSSIKPSSS…SASNFKREVK (68 aa). Helical transmembrane passes span 95 to 115, 122 to 142, 158 to 178, 211 to 231, 233 to 253, 281 to 301, 305 to 325, and 358 to 378; these read LKIG…NIYN, FPYP…MMLV, FWKT…AATV, FPLP…LAAI, ELNF…AFVF, LVIL…AAGW, VSQV…FYHL, and IIIF…IAIF. The EamA domain occupies 113 to 231; it reads IYNKKVLNAF…IIGGCALAAI (119 aa).

The protein belongs to the TPT transporter family. GPT (TC 2.A.7.9) subfamily. In terms of tissue distribution, expressed in seeds, flowers, stamens, and rosette leaves, with highest levels found in sepals and senescing leaves.

The protein resides in the plastid. It is found in the chloroplast membrane. In terms of biological role, glucose 6-phosphate (Glc6P) transporter. Also transports inorganic phosphate, 3-phosphoglycerate, triose phosphates and, to a leser extent, phosphoenolpyruvate. Responsible for the transport of Glc6P into plastids of heterotrophic tissues where it can be used as a carbon source for starch biosynthesis, as substrate for fatty acid biosynthesis or as substrate for NADPH generation via the oxidative pentose phosphate pathway (OPPP). Required for dynamic acclimation of photosynthesis and partitioning of Glc6P between the chloroplast and the cytosol. May modulate the sensing of sugar status during early seedling development. The protein is Glucose-6-phosphate/phosphate translocator 2, chloroplastic of Arabidopsis thaliana (Mouse-ear cress).